Here is a 908-residue protein sequence, read N- to C-terminus: Protein translocase subunit SecA (908 aa).

ATP is bound by residues Q87, 105 to 109 (GEGKT), and D512. The tract at residues 865-908 (GGDDGSDEMMAHTPMIRDGDKVGRNDPCPCGSGRKYKQCHGKLS) is disordered. A compositionally biased stretch (basic and acidic residues) spans 879 to 888 (MIRDGDKVGR). Zn(2+)-binding residues include C892, C894, C903, and H904. Residues 898 to 908 (RKYKQCHGKLS) are compositionally biased toward basic residues.

Belongs to the SecA family. As to quaternary structure, monomer and homodimer. Part of the essential Sec protein translocation apparatus which comprises SecA, SecYEG and auxiliary proteins SecDF-YajC and YidC. It depends on Zn(2+) as a cofactor.

Its subcellular location is the cell inner membrane. The protein resides in the cytoplasm. It carries out the reaction ATP + H2O + cellular proteinSide 1 = ADP + phosphate + cellular proteinSide 2.. Its function is as follows. Part of the Sec protein translocase complex. Interacts with the SecYEG preprotein conducting channel. Has a central role in coupling the hydrolysis of ATP to the transfer of proteins into and across the cell membrane, serving both as a receptor for the preprotein-SecB complex and as an ATP-driven molecular motor driving the stepwise translocation of polypeptide chains across the membrane. This chain is Protein translocase subunit SecA, found in Shewanella sp. (strain MR-4).